We begin with the raw amino-acid sequence, 427 residues long: MAAVVLVGAQWGDEGKGKITDYLAERADVVIRYQGGSNAGHTVMVGHEEFKLHLVPSGILYPGKLCIIGNGVVLDPAVLVEELDGLAARGVDTSGLKISNRAHLILPYHKGLDAAEEEHRGAAMIGTTKRGIGPAYVDKAARTGIRVGDLLDWEEFSAKVAHNLAATNELLAKIYDRPGYDLQAILEEYAGYARRLRPLIADSVRLVNRALQEGRKVLFEGAQGTLLDLDQGTYPFVTSSYPVAGGACIGAGVGPTRIDKVIGVVKAYTTRVGSGPFPTEITGPAGDALRQQGMEFGTTTGRPRRCGWLDTVILRHAAEVNGLTGIALTKLDVLTGLDPLRICTSYRYRGTVGEDFPASLKALEECEPVYEELPGWHEDITGARSLDDLPANCRRYIRRLEELTGVPVHLIAVGPRRDQTIVLESPF.

GTP is bound by residues glycine 12–lysine 18 and glycine 40–threonine 42. Catalysis depends on aspartate 13, which acts as the Proton acceptor. Mg(2+)-binding residues include aspartate 13 and glycine 40. Residues aspartate 13–lysine 16, asparagine 38–histidine 41, threonine 128, arginine 142, glutamine 223, threonine 238, and arginine 302 contribute to the IMP site. Histidine 41 acts as the Proton donor in catalysis. Threonine 298 to arginine 304 serves as a coordination point for substrate. GTP-binding positions include arginine 304, lysine 330–aspartate 332, and alanine 412–glycine 414.

Belongs to the adenylosuccinate synthetase family. As to quaternary structure, homodimer. The cofactor is Mg(2+).

The protein localises to the cytoplasm. The enzyme catalyses IMP + L-aspartate + GTP = N(6)-(1,2-dicarboxyethyl)-AMP + GDP + phosphate + 2 H(+). Its pathway is purine metabolism; AMP biosynthesis via de novo pathway; AMP from IMP: step 1/2. In terms of biological role, plays an important role in the de novo pathway of purine nucleotide biosynthesis. Catalyzes the first committed step in the biosynthesis of AMP from IMP. The sequence is that of Adenylosuccinate synthetase from Moorella thermoacetica (strain ATCC 39073 / JCM 9320).